We begin with the raw amino-acid sequence, 39 residues long: MFAEGRIPLWVVAVIAGLGVIAVVGLFFYGAYAGLGSSL.

The chain crosses the membrane as a helical span at residues 7–27 (IPLWVVAVIAGLGVIAVVGLF).

This sequence belongs to the PsbJ family. As to quaternary structure, PSII is composed of 1 copy each of membrane proteins PsbA, PsbB, PsbC, PsbD, PsbE, PsbF, PsbH, PsbI, PsbJ, PsbK, PsbL, PsbM, PsbT, PsbX, PsbY, PsbZ, Psb30/Ycf12, peripheral proteins PsbO, CyanoQ (PsbQ), PsbU, PsbV and a large number of cofactors. It forms dimeric complexes.

Its subcellular location is the cellular thylakoid membrane. One of the components of the core complex of photosystem II (PSII). PSII is a light-driven water:plastoquinone oxidoreductase that uses light energy to abstract electrons from H(2)O, generating O(2) and a proton gradient subsequently used for ATP formation. It consists of a core antenna complex that captures photons, and an electron transfer chain that converts photonic excitation into a charge separation. This is Photosystem II reaction center protein J from Gloeothece citriformis (strain PCC 7424) (Cyanothece sp. (strain PCC 7424)).